The chain runs to 1196 residues: Beta/alpha-amylase (1196 aa).

The N-terminal stretch at 1-35 (MTLYRSLWKKGCMLLLSLVLSLTAFIGSPSNTASA) is a signal peptide. The segment at 36–454 (AVADDFQASV…IISKAKPDNN (419 aa)) is beta-amylase. D76 provides a ligand contact to substrate. The Ca(2+) site is built by E83 and D87. Residues H116 and D124 each coordinate substrate. C118 and C126 are oxidised to a cystine. E170 contributes to the Ca(2+) binding site. E198 acts as the Proton donor in catalysis. Substrate-binding residues include K314, H319, and T357. The active-site Proton acceptor is the E394. Substrate contacts are provided by residues 395-396 (NA) and R423. 2 consecutive repeats follow at residues 455–558 (GGTG…APAG) and 565–668 (GGTT…APSG). Over residues 544 to 553 (NSGNAGTITS) the composition is skewed to polar residues. A disordered region spans residues 544–566 (NSGNAGTITSGAPAGANPGDGGG). The segment at 669–1196 (SVLSVVTSTY…APKEVKVFTK (528 aa)) is alpha-amylase.

This sequence in the N-terminal section; belongs to the glycosyl hydrolase 14 family. In the C-terminal section; belongs to the glycosyl hydrolase 13 family. Requires Ca(2+) as cofactor.

The protein localises to the secreted. The enzyme catalyses Hydrolysis of (1-&gt;4)-alpha-D-glucosidic linkages in polysaccharides so as to remove successive maltose units from the non-reducing ends of the chains.. It carries out the reaction Endohydrolysis of (1-&gt;4)-alpha-D-glucosidic linkages in polysaccharides containing three or more (1-&gt;4)-alpha-linked D-glucose units.. The precursor protein is proteolytically cleaved to produce multiform beta-amylases and a 48 kDa alpha-amylase after secretion. In Paenibacillus polymyxa (Bacillus polymyxa), this protein is Beta/alpha-amylase.